Here is a 297-residue protein sequence, read N- to C-terminus: Nicotinate-nucleotide pyrophosphorylase [carboxylating] (297 aa).

The important for hexamer formation stretch occupies residues 8 to 12 (LLLPP). Quinolinate is bound by residues arginine 102, 138–139 (RK), 160–161 (HR), lysine 171, glutamate 201, aspartate 222, 248–250 (SGG), and glycine 270.

Belongs to the NadC/ModD family. Hexamer formed by 3 homodimers.

The catalysed reaction is nicotinate beta-D-ribonucleotide + CO2 + diphosphate = quinolinate + 5-phospho-alpha-D-ribose 1-diphosphate + 2 H(+). The protein operates within cofactor biosynthesis; NAD(+) biosynthesis; nicotinate D-ribonucleotide from quinolinate: step 1/1. With respect to regulation, activity toward QA is slightly repressed by phosphoribosylpyrophosphate (PRPP) in both a competitive and a non-competitive manner. Competitively inhibited by phthalic acid (PHT). Involved in the catabolism of quinolinic acid (QA). This Homo sapiens (Human) protein is Nicotinate-nucleotide pyrophosphorylase [carboxylating] (QPRT).